The primary structure comprises 207 residues: Dephospho-CoA kinase (207 aa).

Residues 5–203 (AVGLTGGIAC…ARYRALASVF (199 aa)) form the DPCK domain. 13 to 18 (ACGKSL) provides a ligand contact to ATP.

Belongs to the CoaE family.

The protein localises to the cytoplasm. The enzyme catalyses 3'-dephospho-CoA + ATP = ADP + CoA + H(+). It participates in cofactor biosynthesis; coenzyme A biosynthesis; CoA from (R)-pantothenate: step 5/5. Functionally, catalyzes the phosphorylation of the 3'-hydroxyl group of dephosphocoenzyme A to form coenzyme A. This chain is Dephospho-CoA kinase, found in Xylella fastidiosa (strain 9a5c).